Reading from the N-terminus, the 382-residue chain is Sphingosine 1-phosphate receptor 1 (382 aa).

An N-acetylvaline modification is found at valine 2. At valine 2–lysine 46 the chain is on the extracellular side. Lysine 10 carries the post-translational modification N6-acetyllysine. Asparagine 30 carries an N-linked (GlcNAc...) asparagine glycan. The helical transmembrane segment at leucine 47–leucine 68 threads the bilayer. Over threonine 69–tyrosine 82 the chain is Cytoplasmic. The helical transmembrane segment at phenylalanine 83–leucine 104 threads the bilayer. The Extracellular portion of the chain corresponds to serine 105–glutamine 116. Residues tryptophan 117–isoleucine 138 traverse the membrane as a helical segment. Residue arginine 120–glutamate 121 participates in sphing-4-enine 1-phosphate binding. Over alanine 139 to serine 160 the chain is Cytoplasmic. A helical transmembrane segment spans residues phenylalanine 161–tryptophan 182. Residues asparagine 183 to proline 196 lie on the Extracellular side of the membrane. Cysteine 184 and cysteine 191 are oxidised to a cystine. Residues leucine 197–isoleucine 224 form a helical membrane-spanning segment. The Cytoplasmic segment spans residues tyrosine 225–threonine 257. At threonine 236 the chain carries Phosphothreonine. A helical transmembrane segment spans residues valine 258–leucine 278. Residue phenylalanine 265–tryptophan 269 participates in sphing-4-enine 1-phosphate binding. Residues aspartate 279–isoleucine 289 lie on the Extracellular side of the membrane. Cysteine 282 and cysteine 287 are joined by a disulfide. The helical transmembrane segment at leucine 290–isoleucine 310 threads the bilayer. The Cytoplasmic portion of the chain corresponds to tyrosine 311–serine 382. Residue cysteine 328 is the site of S-palmitoyl cysteine attachment. Residues methionine 348–serine 382 are disordered. Serine 351 and serine 353 each carry phosphoserine. Basic and acidic residues predominate over residues serine 351 to glycine 366. Polar residues predominate over residues threonine 371 to serine 382.

It belongs to the G-protein coupled receptor 1 family. As to quaternary structure, interacts with GNAI1 and GNAI3. Interacts with CD69; this interaction promotes S1PR1 degradation. Palmitoylated by ZDHHC5. Palmitoylation is required for targeting to plasma membrane, enabling G(i) coupling. In terms of tissue distribution, expressed in a wide variety of tissues with highest levels in brain, heart and spleen. Lower levels found in kidney, liver, lung, muscle, placenta, thymus, and uterus. Very low levels in intestine, stomach and testis. According to PubMed:9931453, expressed modestly in apparent endothelial cells surrounding some blood vessels (e.g. aortic trunk).

The protein resides in the cell membrane. It is found in the endosome. Its subcellular location is the membrane raft. In terms of biological role, G-protein coupled receptor for the bioactive lysosphingolipid sphingosine 1-phosphate (S1P) that seems to be coupled to the G(i) subclass of heteromeric G proteins. Signaling leads to the activation of RAC1, SRC, PTK2/FAK1 and MAP kinases. Plays an important role in cell migration, probably via its role in the reorganization of the actin cytoskeleton and the formation of lamellipodia in response to stimuli that increase the activity of the sphingosine kinase SPHK1. Required for normal chemotaxis toward sphingosine 1-phosphate. Required for normal embryonic heart development and normal cardiac morphogenesis. Plays an important role in the regulation of sprouting angiogenesis and vascular maturation. Inhibits sprouting angiogenesis to prevent excessive sprouting during blood vessel development. Required for normal egress of mature T-cells from the thymus into the blood stream and into peripheral lymphoid organs. Plays a role in the migration of osteoclast precursor cells, the regulation of bone mineralization and bone homeostasis. Plays a role in responses to oxidized 1-palmitoyl-2-arachidonoyl-sn-glycero-3-phosphocholine by pulmonary endothelial cells and in the protection against ventilator-induced lung injury. The chain is Sphingosine 1-phosphate receptor 1 from Mus musculus (Mouse).